A 512-amino-acid polypeptide reads, in one-letter code: Cytochrome P450 monooxygenase hkm5 (512 aa).

The helical transmembrane segment at 18 to 38 (LIQLVRALLWVLVITIGGAIV) threads the bilayer. 5 N-linked (GlcNAc...) asparagine glycosylation sites follow: Asn-184, Asn-263, Asn-275, Asn-374, and Asn-419. Cys-456 is a heme binding site.

The protein belongs to the cytochrome P450 family. It depends on heme as a cofactor.

The protein localises to the membrane. It carries out the reaction hancockiamide A + reduced [NADPH--hemoprotein reductase] + O2 = hancockiamide G + oxidized [NADPH--hemoprotein reductase] + 2 H2O + H(+). It catalyses the reaction hancockiamide B + reduced [NADPH--hemoprotein reductase] + O2 = hancockiamide C + oxidized [NADPH--hemoprotein reductase] + 2 H2O + H(+). The catalysed reaction is hancockiamide D + reduced [NADPH--hemoprotein reductase] + O2 = hancockiamide H + oxidized [NADPH--hemoprotein reductase] + 2 H2O + H(+). It functions in the pathway secondary metabolite biosynthesis. Functionally, cytochrome P450 monooxygenase; part of the gene cluster that mediates the biosynthesis of hancockiamides, an unusual new family of N-cinnamoylated piperazines. The NRPS hkm10 and the NmrA-like reductase hkm9 are proposed to convert two molecules of L-Phe to the intermediary piperazine called xenocockiamide A. Xenocockiamide A is then converted to hancockiamide D via a series of hydroxylations and O-methylations. The tyrosinase hkm6 may catalyze an aromatic hydroxylation, then the 2-oxoglutarate-dependent Fe(II) dioxygenase hkm4 and the FAD-dependent phenol hydroxylase hkm7 may catalyze consecutive hydroxylations to install 2 more hydroxy groups, and the methyltransferase hkm8 probably catalyzes two methylations using 2 molecules of S-adenosyl-L-methionine (SAM). The NRPS hkm11 activates and transfers trans-cinnamate supplied by the PAL hkm12 to hancockiamide D and produces hancockiamide A. NRPS Hkm11 has the flexibility to tolerate the bulky hancockiamide G as a substrate and the absence of the acetyl-transferase hkm3 opens up the opportunity for hkm11 to introduce a second N-cinnamoyl moiety. The cytochrome P450 monooxygenase hkm5 catalyzes the methylenedioxy bridge formation, converting hancockiamide A into hancockiamide G. Hkm5 can also convert hancockiamide B into hancockiamide C, and hancockiamide D into hancockiamide H. The N-acetyltransferase hkm3 finally transfers an acetyl group to 1-N of piperazine, converting hancockiamide A into hancockiamide B and hancockiamide G into hancockiamide C. The chain is Cytochrome P450 monooxygenase hkm5 from Aspergillus hancockii.